An 876-amino-acid chain; its full sequence is Leucine--tRNA ligase (876 aa).

The 'HIGH' region signature appears at 43-53 (PYPSGRIHMGH). The 'KMSKS' region motif lies at 632 to 636 (KMSKS). Residue lysine 635 participates in ATP binding.

It belongs to the class-I aminoacyl-tRNA synthetase family.

Its subcellular location is the cytoplasm. It catalyses the reaction tRNA(Leu) + L-leucine + ATP = L-leucyl-tRNA(Leu) + AMP + diphosphate. The sequence is that of Leucine--tRNA ligase from Sinorhizobium fredii (strain NBRC 101917 / NGR234).